A 221-amino-acid chain; its full sequence is N-(5'-phosphoribosyl)anthranilate isomerase (221 aa).

The protein belongs to the TrpF family.

The catalysed reaction is N-(5-phospho-beta-D-ribosyl)anthranilate = 1-(2-carboxyphenylamino)-1-deoxy-D-ribulose 5-phosphate. The protein operates within amino-acid biosynthesis; L-tryptophan biosynthesis; L-tryptophan from chorismate: step 3/5. The chain is N-(5'-phosphoribosyl)anthranilate isomerase from Geobacillus thermodenitrificans (strain NG80-2).